The sequence spans 500 residues: UDP-N-acetylmuramoylalanine--D-glutamate ligase (500 aa).

Residue 111–117 participates in ATP binding; sequence GTNGKST. Positions 260-306 constitute an RPE3 insert domain; that stretch reads DISFELQHNSESFRQDEFQGEPAEPECIKIREHRQDLQNSLVSSFMH.

It belongs to the MurCDEF family.

The protein resides in the cytoplasm. The enzyme catalyses UDP-N-acetyl-alpha-D-muramoyl-L-alanine + D-glutamate + ATP = UDP-N-acetyl-alpha-D-muramoyl-L-alanyl-D-glutamate + ADP + phosphate + H(+). It functions in the pathway cell wall biogenesis; peptidoglycan biosynthesis. In terms of biological role, cell wall formation. Catalyzes the addition of glutamate to the nucleotide precursor UDP-N-acetylmuramoyl-L-alanine (UMA). The protein is UDP-N-acetylmuramoylalanine--D-glutamate ligase (murD) of Rickettsia conorii (strain ATCC VR-613 / Malish 7).